The chain runs to 242 residues: NAD(P)H-quinone oxidoreductase subunit K (242 aa).

[4Fe-4S] cluster is bound by residues cysteine 60, cysteine 61, cysteine 125, and cysteine 156.

The protein belongs to the complex I 20 kDa subunit family. In terms of assembly, NDH-1 can be composed of about 15 different subunits; different subcomplexes with different compositions have been identified which probably have different functions. [4Fe-4S] cluster serves as cofactor.

Its subcellular location is the cellular thylakoid membrane. The enzyme catalyses a plastoquinone + NADH + (n+1) H(+)(in) = a plastoquinol + NAD(+) + n H(+)(out). The catalysed reaction is a plastoquinone + NADPH + (n+1) H(+)(in) = a plastoquinol + NADP(+) + n H(+)(out). Functionally, NDH-1 shuttles electrons from an unknown electron donor, via FMN and iron-sulfur (Fe-S) centers, to quinones in the respiratory and/or the photosynthetic chain. The immediate electron acceptor for the enzyme in this species is believed to be plastoquinone. Couples the redox reaction to proton translocation, and thus conserves the redox energy in a proton gradient. Cyanobacterial NDH-1 also plays a role in inorganic carbon-concentration. In Prochlorococcus marinus (strain SARG / CCMP1375 / SS120), this protein is NAD(P)H-quinone oxidoreductase subunit K.